The following is a 119-amino-acid chain: Protein phosphatase EYA1 (119 aa).

Belongs to the HAD-like hydrolase superfamily. EYA family. Requires Mg(2+) as cofactor.

It is found in the cytoplasm. The protein resides in the nucleus. It carries out the reaction O-phospho-L-tyrosyl-[protein] + H2O = L-tyrosyl-[protein] + phosphate. The catalysed reaction is O-phospho-L-seryl-[protein] + H2O = L-seryl-[protein] + phosphate. The enzyme catalyses O-phospho-L-threonyl-[protein] + H2O = L-threonyl-[protein] + phosphate. In terms of biological role, functions both as protein phosphatase and as transcriptional coactivator for SIX1, and probably also for other transcription factors of this family. Tyrosine phosphatase that dephosphorylates 'Tyr-142' of histone H2AX (H2AXY142ph) and promotes efficient DNA repair via the recruitment of DNA repair complexes containing MDC1. 'Tyr-142' phosphorylation of histone H2AX plays a central role in DNA repair and acts as a mark that distinguishes between apoptotic and repair responses to genotoxic stress. Its function as histone phosphatase may contribute to its function in transcription regulation during organogenesis. Also has phosphatase activity with proteins phosphorylated on Ser and Thr residues (in vitro). Required for normal embryonic development of the skeleton, kidneys and ears. The chain is Protein phosphatase EYA1 (EYA1) from Gallus gallus (Chicken).